A 289-amino-acid chain; its full sequence is Splicing factor C9orf78 homolog (289 aa).

Disordered stretches follow at residues 1–30 and 85–111; these read MRIT…VRLK and RGKD…RRDE. An interaction with SNRNP200 region spans residues 5 to 58; sequence GKTFRRRRADSESEEDEQESEEVRLKLEETREVQNLRKRPNGVSAAALLVGEKV. Residues Ser-15 and Ser-17 each carry the phosphoserine modification. Tyr-147 is subject to Phosphotyrosine. A compositionally biased stretch (basic and acidic residues) spans 232 to 283; the sequence is LNAPIRRNKEEPKARPLRVGDTEKPEPERSPPNRKRPANEKATDDYHYEKFK. A disordered region spans residues 232–289; sequence LNAPIRRNKEEPKARPLRVGDTEKPEPERSPPNRKRPANEKATDDYHYEKFKKMNRRY. Thr-253 is modified (phosphothreonine). Ser-261 is subject to Phosphoserine.

The protein belongs to the TLS1 family. As to quaternary structure, component of the spliceosome. Interacts with SNRNP200; the interaction is direct. Interacts with PRPF8.

The protein localises to the nucleus. Its subcellular location is the chromosome. It localises to the centromere. In terms of biological role, plays a role in pre-mRNA splicing by promoting usage of the upstream 3'-splice site at alternative NAGNAG splice sites; these are sites featuring alternative acceptor motifs separated by only a few nucleotides. May also modulate exon inclusion events. PPlays a role in spliceosomal remodeling by displacing WBP4 from SNRNP200 and may act to inhibit SNRNP200 helicase activity. Binds U5 snRNA. Required for proper chromosome segregation. Not required for splicing of shelterin components. The protein is Splicing factor C9orf78 homolog of Mus musculus (Mouse).